The sequence spans 475 residues: Ribulose bisphosphate carboxylase large chain (475 aa).

The propeptide occupies 1 to 2; it reads MS. Residue Pro-3 is modified to N-acetylproline. Lys-14 bears the N6,N6,N6-trimethyllysine mark. Positions 123 and 173 each coordinate substrate. The active-site Proton acceptor is the Lys-175. Lys-177 is a substrate binding site. Mg(2+)-binding residues include Lys-201, Asp-203, and Glu-204. Lys-201 is modified (N6-carboxylysine). The Proton acceptor role is filled by His-294. Substrate is bound by residues Arg-295, His-327, and Ser-379.

The protein belongs to the RuBisCO large chain family. Type I subfamily. Heterohexadecamer of 8 large chains and 8 small chains; disulfide-linked. The disulfide link is formed within the large subunit homodimers. The cofactor is Mg(2+). The disulfide bond which can form in the large chain dimeric partners within the hexadecamer appears to be associated with oxidative stress and protein turnover.

The protein localises to the plastid. The protein resides in the chloroplast. The catalysed reaction is 2 (2R)-3-phosphoglycerate + 2 H(+) = D-ribulose 1,5-bisphosphate + CO2 + H2O. It catalyses the reaction D-ribulose 1,5-bisphosphate + O2 = 2-phosphoglycolate + (2R)-3-phosphoglycerate + 2 H(+). RuBisCO catalyzes two reactions: the carboxylation of D-ribulose 1,5-bisphosphate, the primary event in carbon dioxide fixation, as well as the oxidative fragmentation of the pentose substrate in the photorespiration process. Both reactions occur simultaneously and in competition at the same active site. The sequence is that of Ribulose bisphosphate carboxylase large chain from Pinus thunbergii (Japanese black pine).